Here is a 379-residue protein sequence, read N- to C-terminus: MFRGAVMKAMLLGILAAFFFSFTFLLNRMMEVEGGSWLFSASMRFLFMLPFLLVIVYIRTGFKALWLSVRKNPFPWFGWSFVGFVLFYAPLTFASGYAPGWLVAGTFQLTIVAGLLLSPLFYHVSADGSRIRQTIPLRSLFSSAVIFVGVVFIQAQHATSISGNLLFSVAPVIVAAFAYPLGNIKMMELTDGCIDTFSRVLGMTVMTTPVWVVLFAIGTIQHGLPTTSQTGQALIVAISSGIIATLLFFYATDRTRKKPNHLLPGRSTQSGEGRVRTHIGASLFASIVSFSTCASRHWTYCHWHGASQLPHTENSTAKFGKSEAKQEWLTLVLEKFWTRQIQAKNPNAVRTFPISLSDFGDSCKPHLAVFFAEMKSWDK.

This is an uncharacterized protein from Shouchella clausii (Alkalihalobacillus clausii).